We begin with the raw amino-acid sequence, 252 residues long: CLAVATA3/ESR (CLE)-related protein 4A-1 (252 aa).

Positions 1–21 are cleaved as a signal peptide; it reads MAKNAMLCLLILRVVLALAFA. A required for secretion from the host cytoplasm to the host apoplasm region spans residues 21–83; it reads ATNKKGDEEP…SNQLPNNNWM (63 aa). Asn32 carries an N-linked (GlcNAc...) asparagine glycan. Residues 116-252 form a disordered region; it reads RKTGMHSQRH…APAGPDPIHH (137 aa). 2 stretches are compositionally biased toward basic and acidic residues: residues 125–137 and 144–242; these read HHEE…EKRV and PIHH…EKRG. An A-1 repeat occupies 127–135; it reads EETTLEQEK. Positions 127–219 are 6 X approximate repeat A; sequence EETTLEQEKR…HEETTLEQEK (93 aa). The stretch at 136–147 is one CLE-1 repeat; that stretch reads RVAGAGPDPIHH. Residues 136–252 form a 6 X approximate repeat CLE region; sequence RVAGAGPDPI…APAGPDPIHH (117 aa). Residues 148 to 156 form an A-2 repeat; sequence QDTTLEQEK. Residues 157 to 168 form a CLE-2 repeat; sequence RAVPAGPDPKHH. One copy of the A-3 repeat lies at 169–177; that stretch reads EETTLEQEK. The CLE-3 repeat unit spans residues 178 to 189; sequence RAVPAGPDPKHH. Residues 190–198 form an A-4 repeat; sequence EETTLEQEK. A CLE-4 repeat occupies 199–210; that stretch reads RAVPAGPDPKHH. An A-5 repeat occupies 211–219; the sequence is EETTLEQEK. Residues 220-231 form a CLE-5 repeat; sequence RAVPAGPDPKHH. An A-6 repeat occupies 232-240; that stretch reads EETTFEQEK. A CLE-6 repeat occupies 241-252; sequence RGAPAGPDPIHH.

It belongs to the CLV3/ESR signal peptide family. As to expression, highly expressed exclusively within the dorsal esophageal gland cell during syncytium formation in host plants.

Its subcellular location is the secreted. It is found in the host cytoplasm. The protein localises to the host extracellular space. It localises to the extracellular space. The protein resides in the apoplast. In terms of biological role, mimics host plant CLE extracellular signal peptides that regulate cell fate. May play a role in the differentiation or division of feeding cells (syncytia) induced in plant roots during infection. This is CLAVATA3/ESR (CLE)-related protein 4A-1 (CLE-4A-1) from Globodera rostochiensis (Golden nematode worm).